The following is a 124-amino-acid chain: Large ribosomal subunit protein bL12 (124 aa).

Belongs to the bacterial ribosomal protein bL12 family. As to quaternary structure, homodimer. Part of the ribosomal stalk of the 50S ribosomal subunit. Forms a multimeric L10(L12)X complex, where L10 forms an elongated spine to which 2 to 4 L12 dimers bind in a sequential fashion. Binds GTP-bound translation factors.

In terms of biological role, forms part of the ribosomal stalk which helps the ribosome interact with GTP-bound translation factors. Is thus essential for accurate translation. This is Large ribosomal subunit protein bL12 from Aromatoleum aromaticum (strain DSM 19018 / LMG 30748 / EbN1) (Azoarcus sp. (strain EbN1)).